Consider the following 756-residue polypeptide: 1-phosphatidylinositol 4,5-bisphosphate phosphodiesterase delta-1 (756 aa).

Positions A21 to H130 constitute a PH domain. Residues K30–K57 are substrate binding. EF-hand domains are found at residues K140–Q175 and V176–R211. Residues D153, N155, D157, K159, E164, D189, S191, T193, S195, and E200 each coordinate Ca(2+). A glycan (O-linked (GlcNAc) serine) is linked at S191. A glycan (O-linked (GlcNAc) threonine) is linked at T193. Residues Q296–K440 enclose the PI-PLC X-box domain. H311 is a catalytic residue. Ca(2+) is bound by residues N312, E341, and D343. Residue H356 is part of the active site. E390 is a Ca(2+) binding site. Substrate is bound by residues K438 and K440. Position 457 is a phosphothreonine (T457). At S460 the chain carries Phosphoserine. The PI-PLC Y-box domain occupies L492–R609. Substrate contacts are provided by S522 and R549. The 129-residue stretch at R609–S737 folds into the C2 domain. Ca(2+) is bound by residues I651, D653, N677, D706, Y707, and D708.

Interacts with TGM2. The cofactor is Ca(2+).

The catalysed reaction is a 1,2-diacyl-sn-glycero-3-phospho-(1D-myo-inositol-4,5-bisphosphate) + H2O = 1D-myo-inositol 1,4,5-trisphosphate + a 1,2-diacyl-sn-glycerol + H(+). It carries out the reaction a 1,2-diacyl-sn-glycero-3-phospho-(1D-myo-inositol) + H2O = 1D-myo-inositol 1-phosphate + a 1,2-diacyl-sn-glycerol + H(+). In terms of biological role, the production of the second messenger molecules diacylglycerol (DAG) and inositol 1,4,5-trisphosphate (IP3) is mediated by activated phosphatidylinositol-specific phospholipase C enzymes. Essential for trophoblast and placental development. Binds phosphatidylinositol 4,5-bisphosphate. This chain is 1-phosphatidylinositol 4,5-bisphosphate phosphodiesterase delta-1, found in Rattus norvegicus (Rat).